The following is a 613-amino-acid chain: Probable LRR receptor-like serine/threonine-protein kinase At5g10290 (613 aa).

Residues 1-31 form the signal peptide; the sequence is MRMFSLQKMAMAFTLLFFACLCSFVSPDAQG. The Extracellular segment spans residues 32-225; the sequence is DALFALRISL…SGDSSKPKTG (194 aa). Residues Asn-81 and Asn-116 are each glycosylated (N-linked (GlcNAc...) asparagine). LRR repeat units follow at residues 95-117, 119-141, 143-166, and 167-189; these read NLKTLTLKGNGITGEIPEDFGNL, SLTSLDLEDNQLTGRIPSTIGNL, KLQFLTLSRNKLNGTIPESLTGLP, and NLLNLLLDSNSLSGQIPQSLFEI. Asn-155 carries an N-linked (GlcNAc...) asparagine glycan. An N-linked (GlcNAc...) asparagine glycan is attached at Asn-193. A helical transmembrane segment spans residues 226–246; sequence IIAGVVAGVTVVLFGILLFLF. Residues 247–613 are Cytoplasmic-facing; it reads CKDRHKGYRR…QDAIELSGGR (367 aa). Thr-287 bears the Phosphothreonine mark. The 280-residue stretch at 290-569 folds into the Protein kinase domain; that stretch reads FSEKNVLGQG…VVRMLEGEGL (280 aa). 296–304 is an ATP binding site; that stretch reads LGQGGFGKV. At Thr-313 the chain carries Phosphothreonine. ATP is bound at residue Lys-318. Ser-371 is subject to Phosphoserine. A Phosphothreonine modification is found at Thr-390. Asp-417 acts as the Proton acceptor in catalysis. 3 positions are modified to phosphothreonine: Thr-450, Thr-451, and Thr-456. Tyr-464 carries the phosphotyrosine modification. A Phosphoserine modification is found at Ser-466. Residue Thr-467 is modified to Phosphothreonine. The residue at position 471 (Ser-471) is a Phosphoserine. Thr-547 is subject to Phosphothreonine.

It belongs to the protein kinase superfamily. Ser/Thr protein kinase family.

It is found in the cell membrane. It carries out the reaction L-seryl-[protein] + ATP = O-phospho-L-seryl-[protein] + ADP + H(+). It catalyses the reaction L-threonyl-[protein] + ATP = O-phospho-L-threonyl-[protein] + ADP + H(+). The sequence is that of Probable LRR receptor-like serine/threonine-protein kinase At5g10290 from Arabidopsis thaliana (Mouse-ear cress).